The primary structure comprises 440 residues: Oligodendrocyte-myelin glycoprotein (440 aa).

The signal sequence occupies residues 1–24; that stretch reads MEYQILKMSSCLFILLFLTPGILC. The 31-residue stretch at 25-55 folds into the LRRNT domain; it reads ICPLQCTCTERHRHVDCSGRNLTTLPPGLQE. N-linked (GlcNAc...) asparagine glycans are attached at residues Asn45 and Asn61. 8 LRR repeats span residues 56–78, 79–100, 101–121, 124–145, 147–168, 169–189, 192–213, and 216–239; these read NIIH…TPYT, NLRT…LPRS, LWNM…DTAY, NLKY…KNTL, SLEV…MPSK, LHIV…TLIN, NLTH…SFDQ, and QLQE…TYLL. An N-linked (GlcNAc...) asparagine glycan is attached at Asn103. N-linked (GlcNAc...) asparagine glycosylation is found at Asn152, Asn176, Asn189, Asn192, and Asn234. 5 Ser/Thr-rich repeats span residues 229 to 270, 271 to 292, 293 to 335, 336 to 377, and 378 to 416; these read CDHK…YPTP, PGFT…INSL, SMVT…VAYP, EDTP…PPSP, and VTLS…TRPP. Residues Asn364 and Asn389 are each glycosylated (N-linked (GlcNAc...) asparagine). A lipid anchor (GPI-anchor amidated serine) is attached at Ser417. Positions 418-440 are cleaved as a propeptide — removed in mature form; that stretch reads AASAWKVNASLLLMLNAVVMLAG. N-linked (GlcNAc...) asparagine glycosylation occurs at Asn425.

Binds to RTN4R. Post-translationally, O-glycosylated in its Ser/Thr-rich repeat domain. In terms of tissue distribution, oligodendrocytes and myelin of the central nervous system.

The protein resides in the cell membrane. In terms of biological role, cell adhesion molecule contributing to the interactive process required for myelination in the central nervous system. The chain is Oligodendrocyte-myelin glycoprotein (Omg) from Mus musculus (Mouse).